The primary structure comprises 284 residues: Phosphoenolpyruvate guanylyltransferase (284 aa).

The interval 94 to 123 (ADLSADEPAGTDAERRADPSAENRASTSAQ) is disordered. Residues 105–114 (DAERRADPSA) are compositionally biased toward basic and acidic residues. Threonine 203, glycine 219, and serine 222 together coordinate phosphoenolpyruvate.

The protein belongs to the CofC family.

The catalysed reaction is phosphoenolpyruvate + GTP + H(+) = enolpyruvoyl-2-diphospho-5'-guanosine + diphosphate. The protein operates within cofactor biosynthesis; coenzyme F420 biosynthesis. Guanylyltransferase that catalyzes the activation of phosphoenolpyruvate (PEP) as enolpyruvoyl-2-diphospho-5'-guanosine, via the condensation of PEP with GTP. It is involved in the biosynthesis of coenzyme F420, a hydride carrier cofactor. This is Phosphoenolpyruvate guanylyltransferase from Sanguibacter keddieii (strain ATCC 51767 / DSM 10542 / NCFB 3025 / ST-74).